Here is an 86-residue protein sequence, read N- to C-terminus: 4-hydroxyphenylacetate decarboxylase small subunit (86 aa).

Residues H3, C6, C19, C36, C45, C48, C62, and C80 each contribute to the [4Fe-4S] cluster site.

This sequence belongs to the HPA decarboxylase small subunit family. Heterooctamer consisting of 4 large (HpdB) subunits and 4 small (HpdC) subunits, arranged as a tetramer of heterodimers. [4Fe-4S] cluster is required as a cofactor.

The catalysed reaction is 4-hydroxyphenylacetate + H(+) = 4-methylphenol + CO2. It catalyses the reaction 3,4-dihydroxyphenylacetate + H(+) = 4-methylcatechol + CO2. In terms of biological role, component of the HPA decarboxylase that decarboxylates phenylacetates with a hydroxyl group in the p-position. Active toward 4-hydroxyphenylacetate and 3,4-dihydroxyphenylacetate, forming 4-methylphenol and 4-methylcatechol, respectively. Is likely involved in the catabolism of aromatic amino acids such as tyrosine fermentation. 4-methylphenol (p-cresol) formation provides metabolic toxicity, which allows an active suppression of other microbes and may provide growth advantages for the producers in highly competitive environments. The small subunit is essential for enzymatic activity of HPA decarboxylase, and also seems to be involved in the regulation of the enzyme oligomeric state and catalytic activity. In Clostridium scatologenes, this protein is 4-hydroxyphenylacetate decarboxylase small subunit.